Reading from the N-terminus, the 470-residue chain is Ribulose bisphosphate carboxylase large chain (470 aa).

Positions 115 and 165 each coordinate substrate. The active-site Proton acceptor is lysine 167. Lysine 169 serves as a coordination point for substrate. Mg(2+)-binding residues include lysine 193, aspartate 195, and glutamate 196. Lysine 193 is modified (N6-carboxylysine). The active-site Proton acceptor is histidine 286. Residues arginine 287, histidine 319, and serine 371 each coordinate substrate.

It belongs to the RuBisCO large chain family. Type I subfamily. Heterohexadecamer of 8 large chains and 8 small chains. The cofactor is Mg(2+).

It is found in the carboxysome. It carries out the reaction 2 (2R)-3-phosphoglycerate + 2 H(+) = D-ribulose 1,5-bisphosphate + CO2 + H2O. The catalysed reaction is D-ribulose 1,5-bisphosphate + O2 = 2-phosphoglycolate + (2R)-3-phosphoglycerate + 2 H(+). Functionally, ruBisCO catalyzes two reactions: the carboxylation of D-ribulose 1,5-bisphosphate, the primary event in carbon dioxide fixation, as well as the oxidative fragmentation of the pentose substrate in the photorespiration process. Both reactions occur simultaneously and in competition at the same active site. This chain is Ribulose bisphosphate carboxylase large chain, found in Synechococcus sp. (strain CC9902).